Here is a 239-residue protein sequence, read N- to C-terminus: MMKLKFYLVYLWYKVLLKLGIKTDEIYYIGGSEALPPPLTKEEEEVLLNKLPKGDQAARSLLIERNLRLVVYIARKFENTGINIEDLISIGTIGLIKAVNTFNPEKKIKLATYASRCIENEILMHLRRNNKNRSEVSFDEPLNIDWDGNELLLSDVLGTDDDIITKDLEATVDRHLLMKALHQLNDREKQIMELRFGLAGGEEKTQKDVADMLGISQSYISRLEKRIIKRLRKEFNKMV.

A propeptide spanning residues 1 to 27 (MMKLKFYLVYLWYKVLLKLGIKTDEIY) is cleaved from the precursor. Positions 86–99 (DLISIGTIGLIKAV) match the Polymerase core binding motif. The segment at residues 206-225 (QKDVADMLGISQSYISRLEK) is a DNA-binding region (H-T-H motif).

The protein belongs to the sigma-70 factor family. In terms of processing, proteolytically cleaved in the N-terminus probably by a SpoIIGA homolog to yield the active peptide.

Sigma factors are initiation factors that promote the attachment of RNA polymerase to specific initiation sites and are then released. This sigma factor directs the transcription of crystal protein genes, a sporulation-regulated event. The protein is RNA polymerase sigma-35 factor (sigE) of Bacillus anthracis.